We begin with the raw amino-acid sequence, 114 residues long: T cell receptor beta variable 6-6 (114 aa).

A signal peptide spans 1 to 21 (MSISLLCCAAFPLLWAGPVNA). In terms of domain architecture, Ig-like spans 22-114 (GVTQTPKFRI…TSVYFCASSY (93 aa)). A disulfide bridge links cysteine 42 with cysteine 110. N-linked (GlcNAc...) asparagine glycosylation occurs at asparagine 84.

As to quaternary structure, alpha-beta TR is a heterodimer composed of an alpha and beta chain; disulfide-linked. The alpha-beta TR is associated with the transmembrane signaling CD3 coreceptor proteins to form the TR-CD3 (TcR or TCR). The assembly of alpha-beta TR heterodimers with CD3 occurs in the endoplasmic reticulum where a single alpha-beta TR heterodimer associates with one CD3D-CD3E heterodimer, one CD3G-CD3E heterodimer and one CD247 homodimer forming a stable octameric structure. CD3D-CD3E and CD3G-CD3E heterodimers preferentially associate with TR alpha and TR beta chains, respectively. The association of the CD247 homodimer is the last step of TcR assembly in the endoplasmic reticulum and is required for transport to the cell surface.

It is found in the cell membrane. In terms of biological role, v region of the variable domain of T cell receptor (TR) beta chain that participates in the antigen recognition. Alpha-beta T cell receptors are antigen specific receptors which are essential to the immune response and are present on the cell surface of T lymphocytes. Recognize peptide-major histocompatibility (MH) (pMH) complexes that are displayed by antigen presenting cells (APC), a prerequisite for efficient T cell adaptive immunity against pathogens. Binding of alpha-beta TR to pMH complex initiates TR-CD3 clustering on the cell surface and intracellular activation of LCK that phosphorylates the ITAM motifs of CD3G, CD3D, CD3E and CD247 enabling the recruitment of ZAP70. In turn ZAP70 phosphorylates LAT, which recruits numerous signaling molecules to form the LAT signalosome. The LAT signalosome propagates signal branching to three major signaling pathways, the calcium, the mitogen-activated protein kinase (MAPK) kinase and the nuclear factor NF-kappa-B (NF-kB) pathways, leading to the mobilization of transcription factors that are critical for gene expression and essential for T cell growth and differentiation. The T cell repertoire is generated in the thymus, by V-(D)-J rearrangement. This repertoire is then shaped by intrathymic selection events to generate a peripheral T cell pool of self-MH restricted, non-autoaggressive T cells. Post-thymic interaction of alpha-beta TR with the pMH complexes shapes TR structural and functional avidity. The protein is T cell receptor beta variable 6-6 of Homo sapiens (Human).